Consider the following 598-residue polypeptide: Integrator complex subunit 11 (598 aa).

Zn(2+)-binding residues include H68, H70, D72, H73, H157, and D178. The HXHXDH motif signature appears at 68–73 (HFHLDH). Residue E203 is part of the active site. Residue H414 coordinates Zn(2+). A Nuclear localization signal motif is present at residues 470–480 (PLPDAKRPRTM).

The protein belongs to the metallo-beta-lactamase superfamily. RNA-metabolizing metallo-beta-lactamase-like family. INTS11 subfamily. Component of the Integrator complex, composed of core subunits INTS1, INTS2, INTS3, INTS4, INTS5, INTS6, INTS7, INTS8, INTS9/RC74, INTS10, INTS11/CPSF3L, INTS12, INTS13, INTS14 and INTS15. The core complex associates with protein phosphatase 2A subunits PPP2CA and PPP2R1A, to form the Integrator-PP2A (INTAC) complex. INTS11 is part of the RNA endonuclease subcomplex, composed of INTS4, INTS9, INTS11 and inositol hexakisphosphate (InsP6). It depends on Zn(2+) as a cofactor.

The protein localises to the nucleus. The protein resides in the cytoplasm. In terms of biological role, RNA endonuclease component of the integrator complex, a multiprotein complex that terminates RNA polymerase II (Pol II) transcription in the promoter-proximal region of genes. The integrator complex provides a quality checkpoint during transcription elongation by driving premature transcription termination of transcripts that are unfavorably configured for transcriptional elongation: the complex terminates transcription by (1) catalyzing dephosphorylation of the C-terminal domain (CTD) of Pol II subunit POLR2A/RPB1 and SUPT5H/SPT5, (2) degrading the exiting nascent RNA transcript via endonuclease activity and (3) promoting the release of Pol II from bound DNA. The integrator complex is also involved in terminating the synthesis of non-coding Pol II transcripts, such as enhancer RNAs (eRNAs), small nuclear RNAs (snRNAs), telomerase RNAs and long non-coding RNAs (lncRNAs). Within the integrator complex, INTS11 constitutes the RNA endonuclease subunit that degrades exiting nascent RNA transcripts. This Danio rerio (Zebrafish) protein is Integrator complex subunit 11 (cpsf3l).